Consider the following 812-residue polypeptide: Plasminogen (812 aa).

Residues 1–19 (MDHKEIILLFLLFLKPGQG) form the signal peptide. Positions 20–98 (DSLDGYVSTQ…RDVILFEKRV (79 aa)) constitute a PAN domain. 21 disulfides stabilise this stretch: C49–C73, C53–C61, C103–C181, C124–C164, C152–C176, C185–C262, C188–C316, C206–C245, C234–C257, C275–C352, C296–C335, C324–C347, C376–C454, C397–C437, C425–C449, C481–C560, C502–C543, C531–C555, C568–C687, C578–C586, and C609–C625. Kringle domains are found at residues 102–181 (ECKT…IPEC), 184–262 (ECMY…IPRC), 274–352 (QCLK…IPSC), 375–454 (ECYQ…LKRC), and 480–560 (DCMY…IPLC). Positions 582-810 (VVGGCVANPH…YVNWIEREMR (229 aa)) constitute a Peptidase S1 domain. Residue S598 is modified to Phosphoserine. Catalysis depends on charge relay system residues H624 and D667. Position 690 is a phosphoserine (S690). 3 disulfide bridges follow: C701-C768, C731-C747, and C758-C786. S762 (charge relay system) is an active-site residue.

This sequence belongs to the peptidase S1 family. Plasminogen subfamily. Interacts (both mature PLG and the angiostatin peptide) with AMOT and CSPG4. Interacts (via the Kringle domains) with HRG; the interaction tethers PLG to the cell surface and enhances its activation. Interacts (via Kringle 4 domain) with ADA; the interaction stimulates PLG activation when in complex with DPP4. Angiostatin: Interacts with ATP5F1A; the interaction inhibits most of the angiogenic effects of angiostatin. In the presence of the inhibitor, the activation involves only cleavage after Arg-581, yielding two chains held together by two disulfide bonds. In the absence of the inhibitor, the activation involves additionally the removal of the activation peptide.

The protein resides in the secreted. The enzyme catalyses Preferential cleavage: Lys-|-Xaa &gt; Arg-|-Xaa, higher selectivity than trypsin. Converts fibrin into soluble products.. With respect to regulation, converted into plasmin by plasminogen activators, both plasminogen and its activator being bound to fibrin. Cannot be activated with streptokinase. Functionally, plasmin dissolves the fibrin of blood clots and acts as a proteolytic factor in a variety of other processes including embryonic development, tissue remodeling, tumor invasion, and inflammation. In ovulation, weakens the walls of the Graafian follicle. It activates the urokinase-type plasminogen activator, collagenases and several complement zymogens, such as C1, C4 and C5. Cleavage of fibronectin and laminin leads to cell detachment and apoptosis. Also cleaves fibrin, thrombospondin and von Willebrand factor. Its role in tissue remodeling and tumor invasion may be modulated by CSPG4. Binds to cells. Its function is as follows. Angiostatin is an angiogenesis inhibitor that blocks neovascularization and growth of experimental primary and metastatic tumors in vivo. The polypeptide is Plasminogen (Plg) (Rattus norvegicus (Rat)).